The sequence spans 260 residues: Serine hydroxymethyltransferase (260 aa).

Lys60 carries the post-translational modification N6-(pyridoxal phosphate)lysine.

It belongs to the SHMT family. In terms of assembly, homodimer. It depends on pyridoxal 5'-phosphate as a cofactor.

It is found in the cytoplasm. It carries out the reaction (6R)-5,10-methylene-5,6,7,8-tetrahydrofolate + glycine + H2O = (6S)-5,6,7,8-tetrahydrofolate + L-serine. It participates in one-carbon metabolism; tetrahydrofolate interconversion. It functions in the pathway amino-acid biosynthesis; glycine biosynthesis; glycine from L-serine: step 1/1. In terms of biological role, catalyzes the reversible interconversion of serine and glycine with tetrahydrofolate (THF) serving as the one-carbon carrier. This reaction serves as the major source of one-carbon groups required for the biosynthesis of purines, thymidylate, methionine, and other important biomolecules. Also exhibits THF-independent aldolase activity toward beta-hydroxyamino acids, producing glycine and aldehydes, via a retro-aldol mechanism. In Corynebacterium sp. (strain P-1), this protein is Serine hydroxymethyltransferase.